Consider the following 179-residue polypeptide: MESDVCRLLDEIQRDIDEEHLVFARRDFECKLEHHKAIRPLLLRRDSVISEALLEMYWGRALAGFDAARGILPRDGCDRTSTQWMRSLVAEYLDGYGYRVHIELNENEFVSNRTLTKRVDLSLASVEKTGVVWRGNRRYPVFEFFESDTQDLDMFDILYELYVNSASYFLMSSRSHPMP.

This is an uncharacterized protein from Encephalitozoon cuniculi (strain GB-M1) (Microsporidian parasite).